Reading from the N-terminus, the 325-residue chain is Probable pectate lyase B (325 aa).

An N-terminal signal peptide occupies residues 1 to 15 (MRLPTLFMLAAIATA). Residues aspartate 132, aspartate 161, and aspartate 165 each contribute to the Ca(2+) site. Arginine 218 is a catalytic residue.

Belongs to the polysaccharide lyase 1 family. The cofactor is Ca(2+).

It is found in the secreted. The enzyme catalyses Eliminative cleavage of (1-&gt;4)-alpha-D-galacturonan to give oligosaccharides with 4-deoxy-alpha-D-galact-4-enuronosyl groups at their non-reducing ends.. Pectinolytic enzyme consist of four classes of enzymes: pectin lyase, polygalacturonase, pectin methylesterase and rhamnogalacturonase. Among pectinolytic enzymes, pectin lyase is the most important in depolymerization of pectin, since it cleaves internal glycosidic bonds of highly methylated pectins. Favors pectate, the anion, over pectin, the methyl ester. The chain is Probable pectate lyase B (plyB) from Aspergillus terreus (strain NIH 2624 / FGSC A1156).